Reading from the N-terminus, the 418-residue chain is Serine hydroxymethyltransferase (418 aa).

Residues Leu-120 and 124 to 126 (GHL) each bind (6S)-5,6,7,8-tetrahydrofolate. An N6-(pyridoxal phosphate)lysine modification is found at Lys-229. 353–355 (SPF) provides a ligand contact to (6S)-5,6,7,8-tetrahydrofolate.

The protein belongs to the SHMT family. In terms of assembly, homodimer. It depends on pyridoxal 5'-phosphate as a cofactor.

It is found in the cytoplasm. The catalysed reaction is (6R)-5,10-methylene-5,6,7,8-tetrahydrofolate + glycine + H2O = (6S)-5,6,7,8-tetrahydrofolate + L-serine. Its pathway is one-carbon metabolism; tetrahydrofolate interconversion. The protein operates within amino-acid biosynthesis; glycine biosynthesis; glycine from L-serine: step 1/1. Functionally, catalyzes the reversible interconversion of serine and glycine with tetrahydrofolate (THF) serving as the one-carbon carrier. This reaction serves as the major source of one-carbon groups required for the biosynthesis of purines, thymidylate, methionine, and other important biomolecules. Also exhibits THF-independent aldolase activity toward beta-hydroxyamino acids, producing glycine and aldehydes, via a retro-aldol mechanism. The chain is Serine hydroxymethyltransferase from Psychrobacter cryohalolentis (strain ATCC BAA-1226 / DSM 17306 / VKM B-2378 / K5).